The sequence spans 520 residues: GMP synthase [glutamine-hydrolyzing] (520 aa).

The region spanning lysine 9–glutamine 202 is the Glutamine amidotransferase type-1 domain. The Nucleophile role is filled by cysteine 86. Catalysis depends on residues histidine 176 and glutamate 178. A GMPS ATP-PPase domain is found at tryptophan 203–arginine 395. Serine 230–serine 236 contributes to the ATP binding site.

As to quaternary structure, homodimer.

It carries out the reaction XMP + L-glutamine + ATP + H2O = GMP + L-glutamate + AMP + diphosphate + 2 H(+). It participates in purine metabolism; GMP biosynthesis; GMP from XMP (L-Gln route): step 1/1. Catalyzes the synthesis of GMP from XMP. In Syntrophotalea carbinolica (strain DSM 2380 / NBRC 103641 / GraBd1) (Pelobacter carbinolicus), this protein is GMP synthase [glutamine-hydrolyzing].